Reading from the N-terminus, the 182-residue chain is Core-binding factor subunit beta (182 aa).

A173 carries the phosphoserine modification.

Belongs to the CBF-beta family. In terms of assembly, heterodimer with RUNX1, RUNX2 and RUNX3. Interacts with COPRS. Found in a complex with PRMT5 and RUNX1. (Microbial infection) Interacts with HIV-1 Vif; forming an active cullin-5-RING E3 ubiquitin-protein ligase complex (ECS complex).

The protein localises to the nucleus. Forms the heterodimeric complex core-binding factor (CBF) with RUNX family proteins (RUNX1, RUNX2, and RUNX3). RUNX members modulate the transcription of their target genes through recognizing the core consensus binding sequence 5'-TGTGGT-3', or very rarely, 5'-TGCGGT-3', within their regulatory regions via their runt domain, while CBFB is a non-DNA-binding regulatory subunit that allosterically enhances the sequence-specific DNA-binding capacity of RUNX. The heterodimers bind to the core site of a number of enhancers and promoters, including murine leukemia virus, polyomavirus enhancer, T-cell receptor enhancers, LCK, IL3 and GM-CSF promoters. CBF complexes repress ZBTB7B transcription factor during cytotoxic (CD8+) T cell development. They bind to RUNX-binding sequence within the ZBTB7B locus acting as transcriptional silencer and allowing for cytotoxic T cell differentiation. In terms of biological role, (Microbial infection) Following infection, hijacked by the HIV-1 Vif protein, leading to the formation a cullin-5-RING E3 ubiquitin-protein ligase complex (ECS complex) that catalyzes ubiquitination and degradation of APOBEC3F and APOBEC3G. The complex can also ubiquitinate APOBEC3H to some extent. Association with HIV-1 Vif protein also inhibits the transcription coactivator activity of CBFB/CBF-beta. The protein is Core-binding factor subunit beta (CBFB) of Homo sapiens (Human).